The primary structure comprises 255 residues: tRNA (guanine-N(1)-)-methyltransferase (255 aa).

Residues G117 and 137-142 (LGDFVL) each bind S-adenosyl-L-methionine.

Belongs to the RNA methyltransferase TrmD family. As to quaternary structure, homodimer.

It localises to the cytoplasm. The enzyme catalyses guanosine(37) in tRNA + S-adenosyl-L-methionine = N(1)-methylguanosine(37) in tRNA + S-adenosyl-L-homocysteine + H(+). Functionally, specifically methylates guanosine-37 in various tRNAs. This is tRNA (guanine-N(1)-)-methyltransferase from Paracidovorax citrulli (strain AAC00-1) (Acidovorax citrulli).